The primary structure comprises 478 residues: Transposase for insertion sequence element IS231D (478 aa).

The protein belongs to the transposase 11 family.

Functionally, involved in the transposition of the insertion sequence. In Bacillus thuringiensis subsp. finitimus, this protein is Transposase for insertion sequence element IS231D.